The sequence spans 329 residues: BTB/POZ domain-containing adapter for CUL3-mediated RhoA degradation protein 1 (329 aa).

Residues methionine 1–serine 22 show a composition bias toward low complexity. Residues methionine 1–tyrosine 31 form a disordered region. Residues lysine 41 to glutamate 109 enclose the BTB domain. Residues alanine 282–histidine 303 are disordered.

It belongs to the BACURD family. Homotetramer; forms a two-fold symmetric tetramer in solution. Interacts with CUL3; interaction is direct and forms a 5:5 heterodecamer. Component of the BCR(KCTD13) E3 ubiquitin ligase complex, at least composed of CUL3, KCTD13/BACURD1 and RBX1. Interacts with RHOA; with a preference for RhoA-GDP. Interacts with POLD2 and PCNA. Interacts with SPRTN. Expressed in a wide variety of tissues.

It localises to the nucleus. The protein operates within protein modification; protein ubiquitination. Functionally, substrate-specific adapter of a BCR (BTB-CUL3-RBX1) E3 ubiquitin-protein ligase complex required for synaptic transmission. The BCR(KCTD13) E3 ubiquitin ligase complex mediates the ubiquitination of RHOA, leading to its degradation by the proteasome Degradation of RHOA regulates the actin cytoskeleton and promotes synaptic transmission. This is BTB/POZ domain-containing adapter for CUL3-mediated RhoA degradation protein 1 (KCTD13) from Homo sapiens (Human).